We begin with the raw amino-acid sequence, 157 residues long: Crossover junction endodeoxyribonuclease RuvC (157 aa).

Catalysis depends on residues D7, E66, and D139. Residues D7, E66, and D139 each contribute to the Mg(2+) site.

The protein belongs to the RuvC family. Homodimer which binds Holliday junction (HJ) DNA. The HJ becomes 2-fold symmetrical on binding to RuvC with unstacked arms; it has a different conformation from HJ DNA in complex with RuvA. In the full resolvosome a probable DNA-RuvA(4)-RuvB(12)-RuvC(2) complex forms which resolves the HJ. It depends on Mg(2+) as a cofactor.

Its subcellular location is the cytoplasm. It carries out the reaction Endonucleolytic cleavage at a junction such as a reciprocal single-stranded crossover between two homologous DNA duplexes (Holliday junction).. Its function is as follows. The RuvA-RuvB-RuvC complex processes Holliday junction (HJ) DNA during genetic recombination and DNA repair. Endonuclease that resolves HJ intermediates. Cleaves cruciform DNA by making single-stranded nicks across the HJ at symmetrical positions within the homologous arms, yielding a 5'-phosphate and a 3'-hydroxyl group; requires a central core of homology in the junction. The consensus cleavage sequence is 5'-(A/T)TT(C/G)-3'. Cleavage occurs on the 3'-side of the TT dinucleotide at the point of strand exchange. HJ branch migration catalyzed by RuvA-RuvB allows RuvC to scan DNA until it finds its consensus sequence, where it cleaves and resolves the cruciform DNA. The sequence is that of Crossover junction endodeoxyribonuclease RuvC from Helicobacter pylori (strain Shi470).